The primary structure comprises 21 residues: Maculatin-1.1 (21 aa).

Phenylalanine 21 carries the phenylalanine amide modification.

As to expression, expressed by the skin dorsal glands.

Its subcellular location is the secreted. Functionally, maculatin-1.1 shows significant antibacterial activity against Gram-positive bacteria, less against Gram-negative bacteria. Maculatin-1.1.1 is inactive. The polypeptide is Maculatin-1.1 (Ranoidea genimaculata (Brown-spotted tree frog)).